An 853-amino-acid chain; its full sequence is Trimethylguanosine synthase (853 aa).

The tract at residues 54–84 is disordered; sequence NNAGDQGTEEEEDGHSNGTAESHSPNESDLD. Phosphothreonine is present on Thr61. The span at 69–80 shows a compositional bias: polar residues; sequence SNGTAESHSPNE. Phosphoserine occurs at positions 81, 85, 92, and 139. Phosphotyrosine is present on Tyr144. A Phosphoserine modification is found at Ser152. 2 disordered regions span residues 328-437 and 523-549; these read VEQS…DDNG and ETSQDSLSQNKMQDTCTSSDSEEQDMS. Over residues 365–383 the composition is skewed to basic and acidic residues; it reads KENDISENRSSDQPAKELQ. A phosphoserine mark is found at Ser405 and Ser431. A compositionally biased stretch (acidic residues) spans 424 to 435; sequence DVDENPDSEVDD. The span at 526-541 shows a compositional bias: polar residues; sequence QDSLSQNKMQDTCTSS. Ser572 is subject to Phosphoserine. The segment at 594–623 is disordered; the sequence is CSTEEIPNSPHAETEVEIKKKKKKNKNKKI. Basic residues predominate over residues 612 to 621; sequence KKKKKKNKNK. Asp711 is an S-adenosyl-L-methionine binding site.

Belongs to the methyltransferase superfamily. Trimethylguanosine synthase family. As to quaternary structure, may form homooligomers. Interacts with CREBBP/CBP, EED/WAIT1, EP300/P300, NCOA6/PRIP, PPARBP/PBP and SMN. As to expression, ubiquitously expressed.

It is found in the cytoplasm. Its subcellular location is the nucleus. The protein localises to the cajal body. The protein resides in the nucleolus. It carries out the reaction a 5'-end (N(7)-methyl 5'-triphosphoguanosine)-ribonucleoside in snRNA + S-adenosyl-L-methionine = a 5'-end (N(2),N(7)-dimethyl 5'-triphosphoguanosine)-ribonucleoside in snRNA + S-adenosyl-L-homocysteine + H(+). The enzyme catalyses a 5'-end (N(7)-methyl 5'-triphosphoguanosine)-ribonucleoside in snoRNA + S-adenosyl-L-methionine = a 5'-end (N(2),N(7)-dimethyl 5'-triphosphoguanosine)-ribonucleoside in snoRNA + S-adenosyl-L-homocysteine + H(+). The catalysed reaction is a 5'-end (N(2),N(7)-dimethyl 5'-triphosphoguanosine)-ribonucleoside in snRNA + S-adenosyl-L-methionine = a 5'-end (N(2),N(2),N(7)-trimethyl 5'-triphosphoguanosine)-ribonucleoside in snRNA + S-adenosyl-L-homocysteine + H(+). It catalyses the reaction a 5'-end (N(2),N(7)-dimethyl 5'-triphosphoguanosine)-ribonucleoside in snoRNA + S-adenosyl-L-methionine = a 5'-end (N(2),N(2),N(7)-trimethyl 5'-triphosphoguanosine)-ribonucleoside in snoRNA + S-adenosyl-L-homocysteine + H(+). Catalyzes the 2 serial methylation steps for the conversion of the 7-monomethylguanosine (m(7)G) caps of snRNAs and snoRNAs to a 2,2,7-trimethylguanosine (m(2,2,7)G) cap structure. The enzyme is specific for guanine, and N7 methylation must precede N2 methylation. Hypermethylation of the m7G cap of U snRNAs leads to their concentration in nuclear foci, their colocalization with coilin and the formation of canonical Cajal bodies (CBs). Plays a role in transcriptional regulation. This Mus musculus (Mouse) protein is Trimethylguanosine synthase (Tgs1).